Here is an 874-residue protein sequence, read N- to C-terminus: Alanine--tRNA ligase (874 aa).

Positions 564, 568, 665, and 669 each coordinate Zn(2+).

It belongs to the class-II aminoacyl-tRNA synthetase family. It depends on Zn(2+) as a cofactor.

It is found in the cytoplasm. The catalysed reaction is tRNA(Ala) + L-alanine + ATP = L-alanyl-tRNA(Ala) + AMP + diphosphate. Catalyzes the attachment of alanine to tRNA(Ala) in a two-step reaction: alanine is first activated by ATP to form Ala-AMP and then transferred to the acceptor end of tRNA(Ala). Also edits incorrectly charged Ser-tRNA(Ala) and Gly-tRNA(Ala) via its editing domain. This Paraburkholderia phytofirmans (strain DSM 17436 / LMG 22146 / PsJN) (Burkholderia phytofirmans) protein is Alanine--tRNA ligase.